Consider the following 341-residue polypeptide: 4-(gamma-L-glutamylamino)butanoyl-[BtrI acyl-carrier protein] monooxygenase BtrO (341 aa).

Belongs to the bacterial luciferase oxidoreductase family.

The catalysed reaction is 4-(gamma-L-glutamylamino)butanoyl-[BtrI ACP] + FMNH2 + O2 = 4-(gamma-L-glutamylamino)-(2S)-2-hydroxybutanoyl-[BtrI ACP] + FMN + H2O + H(+). It functions in the pathway antibiotic biosynthesis; butirosin biosynthesis. Functionally, monooxygenase component of a two-component system involved in the biosynthesis of the side chain of the aminoglycoside antibiotics in the biosynthetic pathway of butirosin. Together with BtrV, mediates hydroxylation of gamma-L-Glu-GABA-S-BtrI. Not able to hydroxylate free substrates, activation by the acyl-carrier protein is mandatory. Octanoyl-S-[BtrI acyl-carrier protein] is also accepted as substrate. The chain is 4-(gamma-L-glutamylamino)butanoyl-[BtrI acyl-carrier protein] monooxygenase BtrO (btrO) from Niallia circulans (Bacillus circulans).